The chain runs to 297 residues: ATP phosphoribosyltransferase (297 aa).

The protein belongs to the ATP phosphoribosyltransferase family.

It localises to the cytoplasm. The catalysed reaction is 1-(5-phospho-beta-D-ribosyl)-ATP + diphosphate = 5-phospho-alpha-D-ribose 1-diphosphate + ATP. It participates in amino-acid biosynthesis; L-histidine biosynthesis; L-histidine from 5-phospho-alpha-D-ribose 1-diphosphate: step 1/9. Catalyzes the condensation of ATP and 5-phosphoribose 1-diphosphate to form N'-(5'-phosphoribosyl)-ATP (PR-ATP). Has a crucial role in the pathway because the rate of histidine biosynthesis seems to be controlled primarily by regulation of the enzymatic activity. This is ATP phosphoribosyltransferase (HIS1) from Kluyveromyces lactis (strain ATCC 8585 / CBS 2359 / DSM 70799 / NBRC 1267 / NRRL Y-1140 / WM37) (Yeast).